The following is a 147-amino-acid chain: Small ribosomal subunit protein uS12 (147 aa).

The segment at 1–22 (MPTINQLVRKPRKSKIEKSDSP) is disordered. 3-methylthioaspartic acid is present on D102.

This sequence belongs to the universal ribosomal protein uS12 family. Part of the 30S ribosomal subunit. Contacts proteins S8 and S17. May interact with IF1 in the 30S initiation complex.

Functionally, with S4 and S5 plays an important role in translational accuracy. Interacts with and stabilizes bases of the 16S rRNA that are involved in tRNA selection in the A site and with the mRNA backbone. Located at the interface of the 30S and 50S subunits, it traverses the body of the 30S subunit contacting proteins on the other side and probably holding the rRNA structure together. The combined cluster of proteins S8, S12 and S17 appears to hold together the shoulder and platform of the 30S subunit. The sequence is that of Small ribosomal subunit protein uS12 from Streptococcus pyogenes serotype M12 (strain MGAS2096).